Reading from the N-terminus, the 349-residue chain is Aspartate carbamoyltransferase catalytic subunit (349 aa).

Residues arginine 59 and threonine 60 each coordinate carbamoyl phosphate. Residue lysine 87 participates in L-aspartate binding. Arginine 109, histidine 142, and glutamine 145 together coordinate carbamoyl phosphate. Residues arginine 182 and arginine 253 each coordinate L-aspartate. The carbamoyl phosphate site is built by glycine 294 and proline 295.

Belongs to the aspartate/ornithine carbamoyltransferase superfamily. ATCase family. Heterododecamer (2C3:3R2) of six catalytic PyrB chains organized as two trimers (C3), and six regulatory PyrI chains organized as three dimers (R2).

It carries out the reaction carbamoyl phosphate + L-aspartate = N-carbamoyl-L-aspartate + phosphate + H(+). The protein operates within pyrimidine metabolism; UMP biosynthesis via de novo pathway; (S)-dihydroorotate from bicarbonate: step 2/3. In terms of biological role, catalyzes the condensation of carbamoyl phosphate and aspartate to form carbamoyl aspartate and inorganic phosphate, the committed step in the de novo pyrimidine nucleotide biosynthesis pathway. The sequence is that of Aspartate carbamoyltransferase catalytic subunit from Synechococcus sp. (strain CC9311).